We begin with the raw amino-acid sequence, 450 residues long: Nuclear hormone receptor family member nhr-40 (450 aa).

Residues 28–103 (GTLCVVCSDF…MGMDPKAIQH (76 aa)) constitute a DNA-binding region (nuclear receptor). NR C4-type zinc fingers lie at residues 31–51 (CVVC…CNGC) and 67–91 (CQFS…LKKC). Residues 173 to 450 (DVKAVIEDLL…LIDQLIIVGL (278 aa)) enclose the NR LBD domain.

This sequence belongs to the nuclear hormone receptor family. As to expression, isoform b: Expressed in body wall muscle cells, pharyngeal muscles, rectal gland cells, vulval and uterine muscles and neurons in the head and ventral nerve cord. Isoform c: Expressed in body wall muscle cells, neurons in the head, nerve ring, ventral and dorsal nerve cords and epidermal cells in the tail.

It is found in the nucleus. In terms of biological role, orphan nuclear receptor. Plays a role in morphogenesis and elongation during embryonic and larval development. Plays a role in muscle formation and motility. This is Nuclear hormone receptor family member nhr-40 from Caenorhabditis elegans.